A 261-amino-acid polypeptide reads, in one-letter code: Small ribosomal subunit protein uS2 (261 aa).

The protein belongs to the universal ribosomal protein uS2 family.

The protein is Small ribosomal subunit protein uS2 of Enterococcus faecalis (strain ATCC 700802 / V583).